Consider the following 141-residue polypeptide: Large ribosomal subunit protein uL11 (141 aa).

This sequence belongs to the universal ribosomal protein uL11 family. Part of the ribosomal stalk of the 50S ribosomal subunit. Interacts with L10 and the large rRNA to form the base of the stalk. L10 forms an elongated spine to which L12 dimers bind in a sequential fashion forming a multimeric L10(L12)X complex. Post-translationally, one or more lysine residues are methylated.

Its function is as follows. Forms part of the ribosomal stalk which helps the ribosome interact with GTP-bound translation factors. The sequence is that of Large ribosomal subunit protein uL11 from Chlamydia abortus (strain DSM 27085 / S26/3) (Chlamydophila abortus).